The primary structure comprises 231 residues: ATP-dependent dethiobiotin synthetase BioD 2 (231 aa).

13–18 (SVGKTV) is a binding site for ATP. Threonine 17 serves as a coordination point for Mg(2+). The active site involves lysine 38. Residues aspartate 55, 112 to 115 (EGTG), 172 to 173 (NR), 201 to 203 (PYL), and glutamine 208 each bind ATP. Mg(2+) contacts are provided by aspartate 55 and glutamate 112.

It belongs to the dethiobiotin synthetase family. Homodimer. Mg(2+) serves as cofactor.

The protein localises to the cytoplasm. The catalysed reaction is (7R,8S)-7,8-diammoniononanoate + CO2 + ATP = (4R,5S)-dethiobiotin + ADP + phosphate + 3 H(+). It functions in the pathway cofactor biosynthesis; biotin biosynthesis; biotin from 7,8-diaminononanoate: step 1/2. Its function is as follows. Catalyzes a mechanistically unusual reaction, the ATP-dependent insertion of CO2 between the N7 and N8 nitrogen atoms of 7,8-diaminopelargonic acid (DAPA, also called 7,8-diammoniononanoate) to form a ureido ring. The polypeptide is ATP-dependent dethiobiotin synthetase BioD 2 (Salmonella typhimurium (strain LT2 / SGSC1412 / ATCC 700720)).